The following is a 186-amino-acid chain: Large ribosomal subunit protein uL16 (186 aa).

It belongs to the universal ribosomal protein uL16 family.

This chain is Large ribosomal subunit protein uL16, found in Nanoarchaeum equitans (strain Kin4-M).